We begin with the raw amino-acid sequence, 703 residues long: Glycine--tRNA ligase beta subunit (703 aa).

The protein belongs to the class-II aminoacyl-tRNA synthetase family. As to quaternary structure, tetramer of two alpha and two beta subunits.

It localises to the cytoplasm. The catalysed reaction is tRNA(Gly) + glycine + ATP = glycyl-tRNA(Gly) + AMP + diphosphate. This is Glycine--tRNA ligase beta subunit from Myxococcus xanthus (strain DK1622).